The primary structure comprises 1040 residues: Multidrug resistance protein MdtB (1040 aa).

12 helical membrane passes run 25 to 45 (LLMA…PVAA), 347 to 367 (LMLA…NIPA), 369 to 389 (IIPG…MVFL), 396 to 416 (LTLM…IVVI), 440 to 460 (IGFT…PLLF), 472 to 492 (FAVT…TLTP), 537 to 557 (WLTL…WIVI), 863 to 883 (LGST…VLGV), 888 to 908 (FIHP…ALLA), 910 to 930 (IIAG…LIGI), 968 to 988 (ILMT…STGV), and 998 to 1018 (IAMV…TPVI).

It belongs to the resistance-nodulation-cell division (RND) (TC 2.A.6) family. MdtB subfamily. In terms of assembly, part of a tripartite efflux system composed of MdtA, MdtB and MdtC. MdtB forms a heteromultimer with MdtC.

It localises to the cell inner membrane. This chain is Multidrug resistance protein MdtB, found in Salmonella agona (strain SL483).